A 625-amino-acid polypeptide reads, in one-letter code: Chromatin structure-remodeling complex subunit RSC4 (625 aa).

The segment at Met1–His35 is disordered. Bromo domains follow at residues Trp53–Ala158 and Lys181–Glu292. Phosphoserine is present on residues Ser199 and Ser545. Positions Arg536–Asn552 are enriched in polar residues. Positions Arg536–Ile555 are disordered.

In terms of assembly, component of the two forms of the RSC complex composed of at least either RSC1 or RSC2, and ARP7, ARP9, LDB7, NPL6, RSC3, RSC30, RSC4, RSC58, RSC6, RSC8, RSC9, SFH1, STH1, HTL1 and probably RTT102. The complexes interact with histone and histone variant components of centromeric chromatin.

It is found in the nucleus. Functionally, component of the chromatin structure remodeling complex (RSC), which is involved in transcription regulation and nucleosome positioning. RSC is responsible for the transfer of a histone octamer from a nucleosome core particle to naked DNA. The reaction requires ATP and involves an activated RSC-nucleosome intermediate. Remodeling reaction also involves DNA translocation, DNA twist and conformational change. As a reconfigurer of centromeric and flanking nucleosomes, RSC complex is required both for proper kinetochore function in chromosome segregation and, via a PKC1-dependent signaling pathway, for organization of the cellular cytoskeleton. The sequence is that of Chromatin structure-remodeling complex subunit RSC4 (RSC4) from Saccharomyces cerevisiae (strain ATCC 204508 / S288c) (Baker's yeast).